The chain runs to 108 residues: UPF0060 membrane protein YnfA (108 aa).

At 1–5 the chain is on the periplasmic side; the sequence is MIKTT. A helical membrane pass occupies residues 6–26; it reads LLFFATALCEIIGCFLPWLWL. The Cytoplasmic segment spans residues 27-30; it reads KRNA. The chain crosses the membrane as a helical span at residues 31-51; that stretch reads SIWLLLPAGISLALFVWLLTL. Topologically, residues 52-60 are periplasmic; sequence HPAASGRIY. Residues 61–81 traverse the membrane as a helical segment; that stretch reads AAYGGVYVCTALMWLRVVDGV. Residues 82–84 are Cytoplasmic-facing; sequence KLT. Residues 85–105 form a helical membrane-spanning segment; the sequence is LYDWTGALIALCGMLIIVAGW. The Periplasmic segment spans residues 106 to 108; that stretch reads GRT.

It belongs to the UPF0060 family.

Its subcellular location is the cell inner membrane. This chain is UPF0060 membrane protein YnfA, found in Shigella dysenteriae serotype 1 (strain Sd197).